The sequence spans 446 residues: MTNYYGHNIVIIGLGITGITCVNFFRSRGITPRVMDTRYNPPQLNQLPKDIQYWLGELKIEWLLAATLIVISPGISLSHPAINTAMKCGIEIIGDVELFLREVTVPVVAITGTNGKSTVAKLVGTMANCAGLKVGVGGNIGYPVLSLLQQSHQLYVLELSSFQLETTKNLKVAVATILNISEDHMDRYPLGLQQYREAKLKIYKQAKIYIINDDDKLTLPANSTNKEYCSIIKFGIKSGHYCLGDYQGKQWLMAYGKPLLDCNEIKIIGRHNLLNALAALALAEAIAIPRQACLIALRQFSGLMHRFELVLERKGIRWINDSKATNVGSTKAALNELTVDGTLHLLLGGDGKLADFSSLQPFVQGNNIHLYCFGKDSKKLAALNQHSATITQTLSQAMHIINNQVKAGDVVLLSPACSSLDQFENFKVRGKTFTNLVFEFNDGNNN.

112–118 (GTNGKST) contributes to the ATP binding site.

It belongs to the MurCDEF family.

It localises to the cytoplasm. The enzyme catalyses UDP-N-acetyl-alpha-D-muramoyl-L-alanine + D-glutamate + ATP = UDP-N-acetyl-alpha-D-muramoyl-L-alanyl-D-glutamate + ADP + phosphate + H(+). Its pathway is cell wall biogenesis; peptidoglycan biosynthesis. Cell wall formation. Catalyzes the addition of glutamate to the nucleotide precursor UDP-N-acetylmuramoyl-L-alanine (UMA). The polypeptide is UDP-N-acetylmuramoylalanine--D-glutamate ligase (Baumannia cicadellinicola subsp. Homalodisca coagulata).